The chain runs to 442 residues: Glutamate-1-semialdehyde 2,1-aminomutase (442 aa).

Lysine 282 carries the N6-(pyridoxal phosphate)lysine modification.

It belongs to the class-III pyridoxal-phosphate-dependent aminotransferase family. HemL subfamily. As to quaternary structure, homodimer. The cofactor is pyridoxal 5'-phosphate.

The protein localises to the cytoplasm. The catalysed reaction is (S)-4-amino-5-oxopentanoate = 5-aminolevulinate. Its pathway is porphyrin-containing compound metabolism; protoporphyrin-IX biosynthesis; 5-aminolevulinate from L-glutamyl-tRNA(Glu): step 2/2. The sequence is that of Glutamate-1-semialdehyde 2,1-aminomutase from Polaromonas sp. (strain JS666 / ATCC BAA-500).